We begin with the raw amino-acid sequence, 226 residues long: Peptidyl-prolyl cis-trans isomerase CYP23 (226 aa).

The signal sequence occupies residues 1-22 (MGITRNLILGLACLAFVSIAKA). One can recognise a PPIase cyclophilin-type domain in the interval 34 to 191 (VVFQTSYGDI…ERITILSTYY (158 aa)).

The protein belongs to the cyclophilin-type PPIase family. As to expression, ubiquitous. Lower expression in roots.

Its subcellular location is the endoplasmic reticulum. The enzyme catalyses [protein]-peptidylproline (omega=180) = [protein]-peptidylproline (omega=0). Its function is as follows. PPIases accelerate the folding of proteins. It catalyzes the cis-trans isomerization of proline imidic peptide bonds in oligopeptides. This Arabidopsis thaliana (Mouse-ear cress) protein is Peptidyl-prolyl cis-trans isomerase CYP23 (CYP23).